A 167-amino-acid polypeptide reads, in one-letter code: uncharacterized protein (167 aa).

Positions 28–59 form a coiled coil; it reads LTGIREELKADIDETRLIAESVLEEKEKKVVE.

This is an uncharacterized protein from Aquifex aeolicus (strain VF5).